The chain runs to 318 residues: Cytochrome c biogenesis protein CcsA (318 aa).

8 helical membrane-spanning segments follow: residues Val-17–Trp-37, Ser-45–Leu-65, Ile-75–Leu-95, Ile-104–Leu-124, Val-149–Phe-169, Thr-224–Asn-244, Thr-258–Phe-275, and Val-287–Ile-307.

It belongs to the CcmF/CycK/Ccl1/NrfE/CcsA family. May interact with ccs1.

It is found in the cellular thylakoid membrane. Functionally, required during biogenesis of c-type cytochromes (cytochrome c6 and cytochrome f) at the step of heme attachment. The protein is Cytochrome c biogenesis protein CcsA of Prochlorococcus marinus (strain MIT 9313).